Reading from the N-terminus, the 689-residue chain is Glycine--tRNA ligase beta subunit (689 aa).

It belongs to the class-II aminoacyl-tRNA synthetase family. In terms of assembly, tetramer of two alpha and two beta subunits.

Its subcellular location is the cytoplasm. It carries out the reaction tRNA(Gly) + glycine + ATP = glycyl-tRNA(Gly) + AMP + diphosphate. This is Glycine--tRNA ligase beta subunit from Shewanella baltica (strain OS155 / ATCC BAA-1091).